Reading from the N-terminus, the 528-residue chain is GMP synthase [glutamine-hydrolyzing] (528 aa).

Positions 22–212 (AILVLDFGSQ…VFKICQSQTN (191 aa)) constitute a Glutamine amidotransferase type-1 domain. The active-site Nucleophile is the Cys99. Residues His186 and Glu188 contribute to the active site. The GMPS ATP-PPase domain occupies 213–403 (WSLESNVETI…LGIKKEALYR (191 aa)). ATP is bound at residue 240–246 (SGGTDSL).

As to quaternary structure, homodimer.

The catalysed reaction is XMP + L-glutamine + ATP + H2O = GMP + L-glutamate + AMP + diphosphate + 2 H(+). Its pathway is purine metabolism; GMP biosynthesis; GMP from XMP (L-Gln route): step 1/1. Its function is as follows. Catalyzes the synthesis of GMP from XMP. This chain is GMP synthase [glutamine-hydrolyzing], found in Borrelia garinii subsp. bavariensis (strain ATCC BAA-2496 / DSM 23469 / PBi) (Borreliella bavariensis).